The chain runs to 419 residues: Queuine tRNA-ribosyltransferase accessory subunit 2 (419 aa).

The Zn(2+) site is built by cysteine 326, cysteine 328, cysteine 331, and histidine 357.

Belongs to the queuine tRNA-ribosyltransferase family. QTRT2 subfamily. Heterodimer of a catalytic subunit and an accessory subunit. Zn(2+) serves as cofactor.

Its subcellular location is the cytoplasm. Non-catalytic subunit of the queuine tRNA-ribosyltransferase (TGT) that catalyzes the base-exchange of a guanine (G) residue with queuine (Q) at position 34 (anticodon wobble position) in tRNAs with GU(N) anticodons (tRNA-Asp, -Asn, -His and -Tyr), resulting in the hypermodified nucleoside queuosine (7-(((4,5-cis-dihydroxy-2-cyclopenten-1-yl)amino)methyl)-7-deazaguanosine). This Drosophila grimshawi (Hawaiian fruit fly) protein is Queuine tRNA-ribosyltransferase accessory subunit 2.